The sequence spans 508 residues: CXXC-type zinc finger protein 1 (508 aa).

The segment at 10-47 adopts a CXXC-type zinc-finger fold; sequence EDVWKERCMNCIRCNDEKNCGTCWPCRNGKTCDMRKCF. 2 disordered regions span residues 95–156 and 453–508; these read QQVE…EPDK and KSQS…TQNN. 2 stretches are compositionally biased toward low complexity: residues 113–123 and 454–481; these read AAAAAQQRKAN and SQSTSSSASAHGATTPISSTSSSSSSSS.

As to quaternary structure, component of the SET2 complex (also known as the SET1/COMPASS complex), which contains at least set-2, swd-2.1, cfp-1, rbbp-5, wdr-5.1, dpy-30 and ash-2. Within the complex, interacts with wdr-5.1, ash-2 and dpy-30. Also interacts with the SIN3S complex, which contains at least sin-3, hda-1, athp-1 and mrg-1. Interacts with sin-3, hda-1 and mrg-1.

It is found in the nucleus. Transcriptional activator that exhibits a unique DNA binding specificity for CpG motifs; enriched at promoters containing the trimethylation mark on histone H3 'Lys-4' (H3K4me3). Forms part of the SET2 complex and interacts with the SIN3S HDAC complex at promoters. Required for H3K4 trimethylation and plays a repressive role in the expression of heat shock and salt-inducible genes. Required for fertility, in cooperation with class I histone deacetylases (HDACs). The chain is CXXC-type zinc finger protein 1 from Caenorhabditis elegans.